A 1401-amino-acid polypeptide reads, in one-letter code: DNA-directed RNA polymerase subunit beta (1401 aa).

The protein belongs to the RNA polymerase beta chain family. The RNAP catalytic core consists of 2 alpha, 1 beta, 1 beta' and 1 omega subunit. When a sigma factor is associated with the core the holoenzyme is formed, which can initiate transcription.

It carries out the reaction RNA(n) + a ribonucleoside 5'-triphosphate = RNA(n+1) + diphosphate. In terms of biological role, DNA-dependent RNA polymerase catalyzes the transcription of DNA into RNA using the four ribonucleoside triphosphates as substrates. In Zymomonas mobilis subsp. mobilis (strain ATCC 31821 / ZM4 / CP4), this protein is DNA-directed RNA polymerase subunit beta.